The following is a 172-amino-acid chain: MNAKTKLVTDRIRLRCMEDRDQATLFGLLFNDPDVMTYYSGLKDKRQTREWVNWNQRNEKGYGVSLWIAEDKRTGEFLGQCGIVPQQIENQTVMEIGYMFARRHWGNGYAQEAARACLDYGFNERQFGKMAALIDPGNKASIRVAEKIGMHYSKTIRKWNKPIAVYERKSYN.

The N-acetyltransferase domain maps to 12–172 (IRLRCMEDRD…IAVYERKSYN (161 aa)).

This is an uncharacterized protein from Bacillus subtilis (strain 168).